The sequence spans 675 residues: MAATLLRSLQRRNLSSSSVSAFRSLTGSTKTSYATHKLASLTRPFSSRPAGNDVIGIDLGTTNSCVSVMEGKNPKVIENSEGARTTPSVVAFNQKSELLVGTPAKRQAVTNPTNTLFGTKRLIGRRFDDAQTQKEMKMVPYKIVRAPNGDAWVEANGQQYSPSQIGAFVLTKIKETAEAYLGKTISKAVVTVPAYFNDAQRQATKDAGRIAGLDVQRIINEPTAAALSYGMNNKEGLIAVFDLGGGTFDVSILEISNGVFEVKATNGDTFLGGEDFDNALLDFLVSEFKRTESIDLAKDKLALQRLREAAEKAKIELSSTSQTEINLPFISADASGAKHLNITLTRSKFEALVNNLIERTKAPCKSCLKDANISIKDVDEVLLVGGMTRVPKVQQVVSEIFGKSPSKGVNPDEAVAMGAALQGGILRGDVKELLLLDVTPLSLGIETLGGIFTRLISRNTTIPTKKSQVFSTAADNQTQVGIKVLQGEREMAADNKSLGEFDLVGIPPAPRGLPQIEVTFDIDANGIVTVSAKDKSTGKEQQITIRSSGGLSDDEIDKMVKEAELHAQRDQERKALIDIRNSADTSIYSIEKSLAEYREKIPAEVAKEIEDAVSDLRTAMAGENADDIKAKLDAANKAVSKIGQHMSGGSSGGPSEGGSQGGEQAPEAEYEEVKK.

The N-terminal 52 residues, 1-52, are a transit peptide targeting the mitochondrion; sequence MAATLLRSLQRRNLSSSSVSAFRSLTGSTKTSYATHKLASLTRPFSSRPAGN. Residues 639 to 675 form a disordered region; it reads VSKIGQHMSGGSSGGPSEGGSQGGEQAPEAEYEEVKK. Residues 649–661 are compositionally biased toward gly residues; it reads GSSGGPSEGGSQG. The span at 666–675 shows a compositional bias: acidic residues; it reads PEAEYEEVKK.

Belongs to the heat shock protein 70 family.

It is found in the mitochondrion. The protein is Heat shock 70 kDa protein, mitochondrial (HSP1) of Pisum sativum (Garden pea).